The following is a 338-amino-acid chain: Heat-inducible transcription repressor HrcA (338 aa).

The protein belongs to the HrcA family.

Negative regulator of class I heat shock genes (grpE-dnaK-dnaJ and groELS operons). Prevents heat-shock induction of these operons. The chain is Heat-inducible transcription repressor HrcA from Bacillus mycoides (strain KBAB4) (Bacillus weihenstephanensis).